A 432-amino-acid chain; its full sequence is Homogentisate 1,2-dioxygenase (432 aa).

H286 acts as the Proton acceptor in catalysis. Positions 329 and 335 each coordinate Fe cation. Residues Y344 and H365 each coordinate homogentisate. H365 is a binding site for Fe cation.

Belongs to the homogentisate dioxygenase family. As to quaternary structure, hexamer; dimer of trimers. It depends on Fe cation as a cofactor.

It carries out the reaction homogentisate + O2 = 4-maleylacetoacetate + H(+). The protein operates within amino-acid degradation; L-phenylalanine degradation; acetoacetate and fumarate from L-phenylalanine: step 4/6. In terms of biological role, involved in the catabolism of homogentisate (2,5-dihydroxyphenylacetate or 2,5-OH-PhAc), a central intermediate in the degradation of phenylalanine and tyrosine. Catalyzes the oxidative ring cleavage of the aromatic ring of homogentisate to yield maleylacetoacetate. This chain is Homogentisate 1,2-dioxygenase, found in Bordetella pertussis (strain Tohama I / ATCC BAA-589 / NCTC 13251).